A 190-amino-acid polypeptide reads, in one-letter code: Large ribosomal subunit protein bL9 (190 aa).

This sequence belongs to the bacterial ribosomal protein bL9 family.

Binds to the 23S rRNA. This chain is Large ribosomal subunit protein bL9, found in Methylobacterium radiotolerans (strain ATCC 27329 / DSM 1819 / JCM 2831 / NBRC 15690 / NCIMB 10815 / 0-1).